Reading from the N-terminus, the 354-residue chain is Sulfate/thiosulfate import ATP-binding protein CysA (354 aa).

The ABC transporter domain occupies 3–237 (IEVRGLSKRF…PATPFVYGFL (235 aa)). 35-42 (GPSGCGKT) is a binding site for ATP.

This sequence belongs to the ABC transporter superfamily. Sulfate/tungstate importer (TC 3.A.1.6) family. The complex is composed of two ATP-binding proteins (CysA), two transmembrane proteins (CysT and CysW) and a solute-binding protein (CysP).

It localises to the cell inner membrane. The catalysed reaction is sulfate(out) + ATP + H2O = sulfate(in) + ADP + phosphate + H(+). It carries out the reaction thiosulfate(out) + ATP + H2O = thiosulfate(in) + ADP + phosphate + H(+). Part of the ABC transporter complex CysAWTP involved in sulfate/thiosulfate import. Responsible for energy coupling to the transport system. The protein is Sulfate/thiosulfate import ATP-binding protein CysA of Bordetella parapertussis (strain 12822 / ATCC BAA-587 / NCTC 13253).